We begin with the raw amino-acid sequence, 315 residues long: Methionyl-tRNA formyltransferase (315 aa).

Residue 113–116 coordinates (6S)-5,6,7,8-tetrahydrofolate; the sequence is SILP.

The protein belongs to the Fmt family.

The catalysed reaction is L-methionyl-tRNA(fMet) + (6R)-10-formyltetrahydrofolate = N-formyl-L-methionyl-tRNA(fMet) + (6S)-5,6,7,8-tetrahydrofolate + H(+). In terms of biological role, attaches a formyl group to the free amino group of methionyl-tRNA(fMet). The formyl group appears to play a dual role in the initiator identity of N-formylmethionyl-tRNA by promoting its recognition by IF2 and preventing the misappropriation of this tRNA by the elongation apparatus. The protein is Methionyl-tRNA formyltransferase of Aliivibrio fischeri (strain MJ11) (Vibrio fischeri).